The chain runs to 227 residues: MAGLLKESMRIKIYMEGTVNGYHFKCEGEGDGNPFEGTQNMRIRVTEGAPLPFAFDILSPCCAYGSKTFIKHTSGIPDYFKQSFPEGFTWERTTIYEDGGVLTAHQDTSLEGNCLIYKVKVLGTNFPADGPVMKKISGGWEPCTEIVYQDNGVLRGRNVMALKVSGRPPLICHLHSTYRSKKACALTMPGFHFADLRIQMPKKKKDEYFELYEASVARYSDVPEKAT.

The 5-imidazolinone (Ala-Gly) cross-link spans Ala-63 to Gly-65. Tyr-64 carries the post-translational modification 2,3-didehydrotyrosine.

This sequence belongs to the GFP family. Homotetramer. In terms of processing, contains a chromophore consisting of modified amino acid residues. The chromophore is formed by autocatalytic backbone condensation between Xaa-N and Gly-(N+2), and oxidation of Tyr-(N+1) to didehydrotyrosine. Maturation of the chromophore requires nothing other than molecular oxygen. The precise stereochemistry of the tyrosine has not been determined.

In terms of biological role, non-fluorescent pigment protein that is mauve in color. The wild-type form is non-fluorescent. The chain is GFP-like non-fluorescent chromoprotein from Condylactis gigantea (Giant Caribbean anemone).